We begin with the raw amino-acid sequence, 826 residues long: Ribonucleases P/MRP protein subunit POP1 (826 aa).

Disordered stretches follow at residues 1–24 (MATT…PRKI) and 49–91 (NKDF…SGGD). The short motif at 58-65 (KRRRTNSY) is the Nuclear localization signal element. Over residues 70–79 (AKKRNIKRQK) the composition is skewed to basic residues.

Component of nuclear RNase P and RNase MRP ribonucleoproteins. RNase P consists of a catalytic RNA moiety and different protein chains. Several subunits of RNase P are also part of the RNase MRP complex. RNase MRP consists of a catalytic RNA moiety and several protein subunits.

It is found in the nucleus. The protein resides in the nucleolus. Functionally, component of ribonuclease P, a ribonucleoprotein complex that generates mature tRNA molecules by cleaving their 5'-ends. Also a component of the MRP ribonuclease complex, which cleaves pre-rRNA sequences. Required for rRNA maturation, including 5.8S rRNA processing. This Arabidopsis thaliana (Mouse-ear cress) protein is Ribonucleases P/MRP protein subunit POP1.